The primary structure comprises 297 residues: N-acetylmuramic acid 6-phosphate etherase (297 aa).

The SIS domain occupies 55-218 (AAAALKSGGR…STGAMVKFGK (164 aa)). Catalysis depends on glutamate 83, which acts as the Proton donor. Glutamate 114 is an active-site residue.

Belongs to the GCKR-like family. MurNAc-6-P etherase subfamily. As to quaternary structure, homodimer.

It carries out the reaction N-acetyl-D-muramate 6-phosphate + H2O = N-acetyl-D-glucosamine 6-phosphate + (R)-lactate. It participates in amino-sugar metabolism; 1,6-anhydro-N-acetylmuramate degradation. It functions in the pathway amino-sugar metabolism; N-acetylmuramate degradation. Its pathway is cell wall biogenesis; peptidoglycan recycling. Specifically catalyzes the cleavage of the D-lactyl ether substituent of MurNAc 6-phosphate, producing GlcNAc 6-phosphate and D-lactate. Together with AnmK, is also required for the utilization of anhydro-N-acetylmuramic acid (anhMurNAc) either imported from the medium or derived from its own cell wall murein, and thus plays a role in cell wall recycling. This chain is N-acetylmuramic acid 6-phosphate etherase, found in Salmonella choleraesuis (strain SC-B67).